The sequence spans 699 residues: MARITPIERYRNIGICAHVDAGKTTTTERVLFYTGLSHKIGEVHDGAATMDWMEQEQERGITITSAATTCFWKGMEGQFEDHRINIIDTPGHVDFTIEVERSLRVLDGAVLVLCGSSGVQPQTETVWRQMEKYAVPRIVFVNKMDRTGADFLYVVEQLKTRLGANAVPIHLAIGAEDDFEGVVDLIKMKAINWNASDQGMTFSYEEIPADMQDMAEEWRENLISEAAEANEELMDKYLEEGDLTEEEIKVGLRARTLANEIILCSCGSAFKNKGVQAVLDAVIEYLPSPTEVAAITGINDDKDESEGIRSADDEAPFSALAFKIATDPFVGTLTFFRVYSGVVQTGDSVYNPVKGKKERFGRIVQMHANDRQEIKEVRAGDIAAAIGLKDVTTGDTLCDAKHIITLERMEFPEPVISVAVEPRTLAAQEKMGIALGKLAAEDPSFRVATDDETGQTIISGMGELHLDILVERMKREFGVECNVGNPQVSYRETIRGTVEVEGKFIRQSGGKGQFGHVWLKMEPNEEGAGFEFVNEIVGGTVPKEFIPAVEKGCKEQMDSGVLAGYPLLDIKVTLYDGSFHDVDSNEIAFKVAASMGFRKGALEANPVILEPMMKVEVTTPEANMGDVVGDLNRRRGMIDGMDEGPAGSKIVNALVPLAEMFGYATDLRSATQGRASYSMEFQQYNEAPKLVAQKIMETR.

Residues 8 to 290 (ERYRNIGICA…AVIEYLPSPT (283 aa)) form the tr-type G domain. GTP contacts are provided by residues 17-24 (AHVDAGKT), 88-92 (DTPGH), and 142-145 (NKMD).

Belongs to the TRAFAC class translation factor GTPase superfamily. Classic translation factor GTPase family. EF-G/EF-2 subfamily.

It localises to the cytoplasm. Functionally, catalyzes the GTP-dependent ribosomal translocation step during translation elongation. During this step, the ribosome changes from the pre-translocational (PRE) to the post-translocational (POST) state as the newly formed A-site-bound peptidyl-tRNA and P-site-bound deacylated tRNA move to the P and E sites, respectively. Catalyzes the coordinated movement of the two tRNA molecules, the mRNA and conformational changes in the ribosome. In Colwellia psychrerythraea (strain 34H / ATCC BAA-681) (Vibrio psychroerythus), this protein is Elongation factor G 2.